The sequence spans 191 residues: FMN reductase (NADH) RutF (191 aa).

It belongs to the non-flavoprotein flavin reductase family. RutF subfamily.

It carries out the reaction FMNH2 + NAD(+) = FMN + NADH + 2 H(+). In terms of biological role, catalyzes the reduction of FMN to FMNH2 which is used to reduce pyrimidine by RutA via the Rut pathway. In Escherichia coli O1:K1 / APEC, this protein is FMN reductase (NADH) RutF.